Here is a 311-residue protein sequence, read N- to C-terminus: Probable porphobilinogen deaminase (311 aa).

Cys-237 carries the S-(dipyrrolylmethanemethyl)cysteine modification. The interval 270–289 (SKTGDKNNPKSLGQSAGEEL) is disordered.

The protein belongs to the HMBS family. It depends on dipyrromethane as a cofactor.

It catalyses the reaction 4 porphobilinogen + H2O = hydroxymethylbilane + 4 NH4(+). The protein operates within porphyrin-containing compound metabolism; protoporphyrin-IX biosynthesis; coproporphyrinogen-III from 5-aminolevulinate: step 2/4. Functionally, tetrapolymerization of the monopyrrole PBG into the hydroxymethylbilane pre-uroporphyrinogen in several discrete steps. This chain is Probable porphobilinogen deaminase, found in Nitrosopumilus maritimus (strain SCM1).